A 172-amino-acid chain; its full sequence is uncharacterized protein (172 aa).

2 disordered regions span residues 1–54 (MPRR…GGSS) and 82–111 (ITGG…SVPE). A compositionally biased stretch (low complexity) spans 14–29 (AAPARSASTAAALPPR). A compositionally biased stretch (pro residues) spans 30–47 (TMAPPPAPSRVQQAPPPT). Residues 89 to 109 (SGSNNAPADTSVPQSSYSNSV) show a composition bias toward polar residues.

This is an uncharacterized protein from Schizosaccharomyces pombe (strain 972 / ATCC 24843) (Fission yeast).